Reading from the N-terminus, the 210-residue chain is Probable septum site-determining protein MinC (210 aa).

It belongs to the MinC family. Interacts with MinD and FtsZ.

Functionally, cell division inhibitor that blocks the formation of polar Z ring septums. Rapidly oscillates between the poles of the cell to destabilize FtsZ filaments that have formed before they mature into polar Z rings. Prevents FtsZ polymerization. This chain is Probable septum site-determining protein MinC, found in Thermotoga petrophila (strain ATCC BAA-488 / DSM 13995 / JCM 10881 / RKU-1).